A 737-amino-acid chain; its full sequence is Protein translocase subunit SecDF (737 aa).

The Cytoplasmic portion of the chain corresponds to 1–5 (MKKGR). Positions 1 to 416 (MKKGRLIAFF…LLVESRWLDR (416 aa)) are secD. Residues 6 to 26 (LIAFFLFVLLIGTGLGYFTKP) form a helical membrane-spanning segment. At 27–254 (AANNITLGLD…SVGAQFGQQA (228 aa)) the chain is on the extracellular side. The chain crosses the membrane as a helical span at residues 255 to 275 (LHDTVFAGIVGIAIIFLFMLF). Residues 276–278 (YYR) are Cytoplasmic-facing. Residues 279 to 299 (LPGLIAVITLSVYIYITLQIF) traverse the membrane as a helical segment. Residues 300-301 (DW) lie on the Extracellular side of the membrane. Residues 302–322 (MNAVLTLPGIAALILGVGMAV) traverse the membrane as a helical segment. Residues 323–353 (DANIITYERIKEELKLGKSVRSAFRSGNRRS) are Cytoplasmic-facing. Residues 354–374 (FATIFDANITTIIAAVVLFIF) form a helical membrane-spanning segment. The Extracellular segment spans residues 375–380 (GTSSVK). A helical transmembrane segment spans residues 381–401 (GFATMLILSILTSFITAVFLS). The Cytoplasmic portion of the chain corresponds to 402–453 (RFLLALLVESRWLDRKKGWFGVNKKHIMDIQDTDENTEPHTPFQKWDFTSKR). A secF region spans residues 446–737 (KWDFTSKRKY…GRELKKDSAQ (292 aa)). The helical transmembrane segment at 454 to 474 (KYFFIFSSAVTVAGIIILLVF) threads the bilayer. The Extracellular portion of the chain corresponds to 475-569 (RLNLGIDFAS…PTVGKELARN (95 aa)). The chain crosses the membrane as a helical span at residues 570-590 (ALYAVAIASIGIIIYVSIRFE). The Cytoplasmic portion of the chain corresponds to 591 to 593 (YKM). The helical transmembrane segment at 594 to 614 (AIAAIASLLYDAFFIVTFFSI) threads the bilayer. Residues 615 to 621 (TRLEVDV) lie on the Extracellular side of the membrane. A helical transmembrane segment spans residues 622–642 (TFIAAILTIIGYSINDTIVTF). Over 643-677 (DRVREHMKKRKPKTFADLNHIVNLSLQQTFTRSIN) the chain is Cytoplasmic. Residues 678–698 (TVLTVVIVVVTLLIFGASSIT) form a helical membrane-spanning segment. A topological domain (extracellular) is located at residue Asn-699. A helical transmembrane segment spans residues 700-720 (FSIALLVGLLTGVYSSLYIAA). At 721 to 737 (QIWLAWKGRELKKDSAQ) the chain is on the cytoplasmic side.

It in the N-terminal section; belongs to the SecD/SecF family. SecD subfamily. The protein in the C-terminal section; belongs to the SecD/SecF family. SecF subfamily. In terms of assembly, part of the essential Sec protein translocation apparatus which comprises SecA, SecYEG and auxiliary protein SecDF. Other proteins may also be involved.

Its subcellular location is the cell membrane. In terms of biological role, required for efficient translocation of secretory pre-proteins under conditions of hypersecretion but is not required for the release of mature proteins from the membrane. Its function is as follows. Part of the Sec protein translocase complex. Interacts with the SecYEG preprotein conducting channel. SecDF uses the proton motive force (PMF) to complete protein translocation after the ATP-dependent function of SecA. The sequence is that of Protein translocase subunit SecDF (secDF) from Bacillus subtilis (strain 168).